A 1451-amino-acid polypeptide reads, in one-letter code: Protein clueless (1451 aa).

2 disordered regions span residues 1–101 (MALE…EYAA) and 264–286 (KKTR…VSEP). Residues 9-53 (NSNATATGDATATKASSKAKENNNTAGGKKNLNPIPSQQNSNQNL) are compositionally biased toward low complexity. Residues 66–75 (GKKKGKKNRN) show a composition bias toward basic residues. At serine 270 the chain carries Phosphoserine. The region spanning 424-666 (RAEDAFSSKL…RTFPPDVNFL (243 aa)) is the Clu domain. Disordered stretches follow at residues 722-775 (AKKQ…ESKT), 961-1012 (AVSS…SSVS), and 1413-1451 (ANNN…ATSS). A compositionally biased stretch (basic and acidic residues) spans 748–758 (GADKTDVKEEK). Residues 969 to 984 (KKRGNGGKHNKHKSSK) are compositionally biased toward basic residues. The span at 989 to 1010 (QQQQQTTGNQNGSSSGTSNGSS) shows a compositional bias: low complexity.

Belongs to the CLU family.

The protein resides in the cytoplasm. Functionally, mRNA-binding protein involved in proper cytoplasmic distribution of mitochondria. This Drosophila yakuba (Fruit fly) protein is Protein clueless.